The following is a 429-amino-acid chain: 3-phosphoshikimate 1-carboxyvinyltransferase (429 aa).

The 3-phosphoshikimate site is built by Lys-23, Ser-24, and Arg-28. Lys-23 contacts phosphoenolpyruvate. Phosphoenolpyruvate contacts are provided by Gly-95 and Arg-123. 3-phosphoshikimate-binding residues include Ser-168, Gln-170, Asp-316, and Lys-343. Gln-170 is a binding site for phosphoenolpyruvate. Asp-316 acts as the Proton acceptor in catalysis. Residues Arg-347 and Arg-389 each coordinate phosphoenolpyruvate.

It belongs to the EPSP synthase family. Monomer.

The protein localises to the cytoplasm. The enzyme catalyses 3-phosphoshikimate + phosphoenolpyruvate = 5-O-(1-carboxyvinyl)-3-phosphoshikimate + phosphate. It participates in metabolic intermediate biosynthesis; chorismate biosynthesis; chorismate from D-erythrose 4-phosphate and phosphoenolpyruvate: step 6/7. Its function is as follows. Catalyzes the transfer of the enolpyruvyl moiety of phosphoenolpyruvate (PEP) to the 5-hydroxyl of shikimate-3-phosphate (S3P) to produce enolpyruvyl shikimate-3-phosphate and inorganic phosphate. In Bacillus thuringiensis subsp. konkukian (strain 97-27), this protein is 3-phosphoshikimate 1-carboxyvinyltransferase.